Here is a 955-residue protein sequence, read N- to C-terminus: Serine-aspartate repeat-containing protein C (955 aa).

Positions 1-50 (MNNKKTVTNRKGMIPNRLNKFSIRKYSVGTASILVGTTLIFGLSGHEAKA) are cleaved as a signal peptide. The interval 51-166 (AEHTNGELNQ…TPKTTTIKPR (116 aa)) is disordered. Positions 51–495 (AEHTNGELNQ…GSSTANGDQK (445 aa)) are ligand binding A region. The span at 56-71 (GELNQSKNETTAPSEN) shows a compositional bias: polar residues. Residues 72–83 (KTTEKVDSHQLK) show a composition bias toward basic and acidic residues. A compositionally biased stretch (polar residues) spans 84 to 114 (DNTQTATADQPKVTMSDSATFKETSSNMQSP). The span at 115-132 (QNATASQSTTQTSNVTTN) shows a compositional bias: low complexity. A compositionally biased stretch (polar residues) spans 133–164 (DKSSTTYSNETDKSNLTQAKDVSATPKTTTIK). 2 consecutive CNA-B domains span residues 496 to 606 (KYNL…YKTP) and 607 to 717 (KYSL…EEET). Residues 678 to 935 (TQTGTNTTED…NNSNNGTLFG (258 aa)) form a disordered region. Acidic residues-rich tracts occupy residues 685–695 (TEDDKDADGGE) and 712–894 (YYEE…DSDS). Residues 918 to 922 (LPETG) carry the LPXTG sorting signal motif. A compositionally biased stretch (low complexity) spans 920–935 (ETGSENNNSNNGTLFG). Thr-921 is modified (pentaglycyl murein peptidoglycan amidated threonine). A propeptide spans 922-955 (GSENNNSNNGTLFGGLFAALGSLLLFGRRKKQNK) (removed by sortase).

This sequence belongs to the serine-aspartate repeat-containing protein (SDr) family. In terms of assembly, homodimerizes; via N2-Domain. Interacts with host NRXN1; this interaction mediates bacterial attachment to host cells.

The protein resides in the secreted. Its subcellular location is the cell wall. Cell surface-associated calcium-binding protein which plays an important role in adhesion and pathogenesis. Mediates interactions with components of the extracellular matrix such as host NRXN1 to promote bacterial adhesion. This Staphylococcus aureus (strain MW2) protein is Serine-aspartate repeat-containing protein C (sdrC).